We begin with the raw amino-acid sequence, 81 residues long: uncharacterized protein (81 aa).

An N-terminal signal peptide occupies residues 1–16; sequence MNRLTFYGLCLSGAVG. Residues 55-81 form a disordered region; sequence TIDPHHNHHDDHHDSHGHGHGKIKGHH. Basic and acidic residues predominate over residues 57 to 71; sequence DPHHNHHDDHHDSHG. Residues 72–81 show a composition bias toward basic residues; that stretch reads HGHGKIKGHH.

Its subcellular location is the secreted. This is an uncharacterized protein from Dictyostelium discoideum (Social amoeba).